A 503-amino-acid chain; its full sequence is MPSKTKYNLVDDGHDLRIPLHNEDAFQHGISFEAKYVGSLDVPRPNSRVEIVAAMRRIRYEFKAKNIKKKKVSIMVSVDGVKVILKKKKKKKEWTWDESKMLVMQDPIYRIFYVSHDSQDLKIFSYIARDGASNIFRCNVFKSKKKSQAMRIVRTVGQAFEVCHKLSLQHTQQNADGQEDGESERNSDGSGDPGRQLTGAERVSTAAAEETDIDAVEVPLPGNDILEFSRGVTDLDAVGKDGGSHIDSTVSPHPQEPMLTASPRMLLPSSSSKPPGLGTGTPLSTHHQMQLLQQLLQQQQQQTQVAVAQVHLLKDQLAAEAAARLEAQARVHQLLLQNKDMLQHISLLVKQVQELELKLSGQNTMGSQDSLLEITFRSGALPVLCESTTPKPEDLHSPLLGAGLADFAHPAGSPLGRHDCLVKLECFRFLPPEDTQPMMAQGEPLLGGLELIKFRESGIASEYESNTDESEERDSWSQEELPRLLNVLQRQELGDSLDDEIAV.

The region spanning 26 to 191 (FQHGISFEAK…ESERNSDGSG (166 aa)) is the PID domain. The segment at 170–212 (HTQQNADGQEDGESERNSDGSGDPGRQLTGAERVSTAAAEETD) is disordered. Phosphoserine is present on residues Ser183, Ser187, Ser190, and Ser262. Positions 318 to 359 (AAEAAARLEAQARVHQLLLQNKDMLQHISLLVKQVQELELKL) form a coiled coil. Ser367, Ser370, Ser397, and Ser413 each carry phosphoserine. The tract at residues 491–503 (QELGDSLDDEIAV) is interaction with NOS1. The PDZ-binding motif lies at 501 to 503 (IAV).

In terms of assembly, interacts with the PDZ domain of NOS1 or the second PDZ domain of DLG4 through its C-terminus. Interacts with RASD1 and SYN1, SYN2 and SYN3 via its PID domain. Forms a ternary complex with NOS1 and SYN1. Forms a ternary complex with NOS1 and RASD1.

Its subcellular location is the cell projection. The protein resides in the filopodium. It is found in the podosome. Its function is as follows. Adapter protein involved in neuronal nitric-oxide (NO) synthesis regulation via its association with nNOS/NOS1. The complex formed with NOS1 and synapsins is necessary for specific NO and synapsin functions at a presynaptic level. Mediates an indirect interaction between NOS1 and RASD1 leading to enhance the ability of NOS1 to activate RASD1. Competes with DLG4 for interaction with NOS1, possibly affecting NOS1 activity by regulating the interaction between NOS1 and DLG4. In kidney podocytes, plays a role in podosomes and filopodia formation through CDC42 activation. This is Carboxyl-terminal PDZ ligand of neuronal nitric oxide synthase protein from Mus musculus (Mouse).